Consider the following 542-residue polypeptide: Major facilitator superfamily transporter mfsA (542 aa).

11 helical membrane passes run 19-39 (FAAV…AGLL), 70-90 (GAVT…SMFC), 99-119 (LIFM…VCYT), 127-149 (FVIG…PVWQ), 160-180 (FLVC…YWVV), 194-214 (FPVA…LMLP), 321-341 (IMGG…FFMI), 349-369 (LYLI…ACLI), 380-400 (AVGI…LPWI), 413-432 (VGAS…VVMF), and 444-464 (VYLF…FFYV).

It belongs to the major facilitator superfamily. Sugar transporter (TC 2.A.1.1) family.

It is found in the membrane. Major facilitator superfamily transporter that may be involved in A.fumigatus adaptation to azoles such as vorizonazole. This Aspergillus fumigatus (strain ATCC MYA-4609 / CBS 101355 / FGSC A1100 / Af293) (Neosartorya fumigata) protein is Major facilitator superfamily transporter mfsA.